Here is a 326-residue protein sequence, read N- to C-terminus: MIPALDIDSLEHRLVAGDRAALARAITLVESRRADHQVAARTLLSRLMPLTGRAQRIGITGVPGAGKSTTIERFGCNLVEAGHRVAVLAVDPSSGRHGGSILGDKTRMEQLSVQANAFIRPSPSGGALGGVARKTREAMLLCEAAGFDVVIIETVGVGQSETVVADMVDIFLALLIPGGGDELQGIKKGLIELADLLVINKADADPAKAERSARDYRNALHILTPAHPDWTPPVLTASGLTGQGLDVLWTQILRHREVMTANGARAARRADQDARWMWAMVRDRLEDAFKTAPAVAALVPDLETAVREGEVPASAAADRLLAAFGL.

GTP is bound by residues 61–69 (GVPGAGKST), D203, and 238–240 (SGL).

The protein belongs to the SIMIBI class G3E GTPase family. ArgK/MeaB subfamily.

Its function is as follows. May have GTPase activity. May also bind and hydrolyze ATP. May function as chaperone. The sequence is that of Putative GTPase CC_2483 from Caulobacter vibrioides (strain ATCC 19089 / CIP 103742 / CB 15) (Caulobacter crescentus).